A 50-amino-acid chain; its full sequence is ANACTKQADCAEDECCLDNLFFKRPYCEMRYGAGKRCAAASVYKEDKDLY.

As to expression, expressed by the venom gland.

The protein resides in the secreted. In terms of biological role, possible neurotoxin. The chain is U3-ctenitoxin-Asp1a from Ancylometes sp. (South American fishing spider).